Here is a 168-residue protein sequence, read N- to C-terminus: Prolyl-tRNA synthetase associated domain-containing protein 1 (168 aa).

This sequence belongs to the PRORSD1 family.

This is Prolyl-tRNA synthetase associated domain-containing protein 1 (prorsd1p) from Xenopus laevis (African clawed frog).